Consider the following 501-residue polypeptide: Lysine--tRNA ligase (501 aa).

Mg(2+) contacts are provided by glutamate 411 and glutamate 418.

This sequence belongs to the class-II aminoacyl-tRNA synthetase family. In terms of assembly, homodimer. Mg(2+) serves as cofactor.

The protein localises to the cytoplasm. The catalysed reaction is tRNA(Lys) + L-lysine + ATP = L-lysyl-tRNA(Lys) + AMP + diphosphate. The protein is Lysine--tRNA ligase of Aliivibrio fischeri (strain ATCC 700601 / ES114) (Vibrio fischeri).